Reading from the N-terminus, the 65-residue chain is Large ribosomal subunit protein bL35 (65 aa).

This sequence belongs to the bacterial ribosomal protein bL35 family.

The sequence is that of Large ribosomal subunit protein bL35 from Syntrophobacter fumaroxidans (strain DSM 10017 / MPOB).